The sequence spans 141 residues: SsrA-binding protein (141 aa).

The protein belongs to the SmpB family.

The protein localises to the cytoplasm. In terms of biological role, required for rescue of stalled ribosomes mediated by trans-translation. Binds to transfer-messenger RNA (tmRNA), required for stable association of tmRNA with ribosomes. tmRNA and SmpB together mimic tRNA shape, replacing the anticodon stem-loop with SmpB. tmRNA is encoded by the ssrA gene; the 2 termini fold to resemble tRNA(Ala) and it encodes a 'tag peptide', a short internal open reading frame. During trans-translation Ala-aminoacylated tmRNA acts like a tRNA, entering the A-site of stalled ribosomes, displacing the stalled mRNA. The ribosome then switches to translate the ORF on the tmRNA; the nascent peptide is terminated with the 'tag peptide' encoded by the tmRNA and targeted for degradation. The ribosome is freed to recommence translation, which seems to be the essential function of trans-translation. The chain is SsrA-binding protein from Ureaplasma parvum serovar 3 (strain ATCC 27815 / 27 / NCTC 11736).